We begin with the raw amino-acid sequence, 44 residues long: Protein PsbN (44 aa).

A helical membrane pass occupies residues 6-26; that stretch reads FFYGVFLWCLLISVTGYSIYI.

Belongs to the PsbN family.

The protein resides in the plastid. It is found in the chloroplast thylakoid membrane. Functionally, may play a role in photosystem I and II biogenesis. This is Protein PsbN from Ostreococcus tauri.